A 280-amino-acid polypeptide reads, in one-letter code: SPX domain-containing protein 2 (280 aa).

The SPX domain maps to 1–162; sequence MKFGKSLSSQ…GSMIRLPFVQ (162 aa). 2 disordered regions span residues 191-244 and 257-280; these read PTNE…KSTV and GSST…EPGR.

Interacts (via SPX domain) with PHR2 (via C-terminus). Interacts with RLI1 in the nucleus to prevents its positive regulation of leaf inclination during phosphate (Pi) starvation. In terms of tissue distribution, predominantly expressed in roots, leaves and seeds. Localized in leaves lamina joints.

It localises to the nucleus. Its function is as follows. Inhibits PHR2 DNA-binding activity via a phosphate (Pi)-dependent protein interaction. Together with SPX1, plays a negative role in the regulation of leaf inclination by preventing RLI1 transcription factor activity in Pi depleted conditions. The polypeptide is SPX domain-containing protein 2 (Oryza sativa subsp. japonica (Rice)).